A 333-amino-acid chain; its full sequence is Homoserine O-succinyltransferase (333 aa).

The active-site Acyl-thioester intermediate is cysteine 147. Residues lysine 168 and serine 196 each coordinate substrate. The active-site Proton acceptor is the histidine 239. Glutamate 241 is a catalytic residue. Arginine 253 serves as a coordination point for substrate.

It belongs to the MetA family.

Its subcellular location is the cytoplasm. It catalyses the reaction L-homoserine + succinyl-CoA = O-succinyl-L-homoserine + CoA. It functions in the pathway amino-acid biosynthesis; L-methionine biosynthesis via de novo pathway; O-succinyl-L-homoserine from L-homoserine: step 1/1. Its function is as follows. Transfers a succinyl group from succinyl-CoA to L-homoserine, forming succinyl-L-homoserine. This Rhodopseudomonas palustris protein is Homoserine O-succinyltransferase.